A 296-amino-acid chain; its full sequence is Ribosome biogenesis GTPase A (296 aa).

The CP-type G domain maps to 14-178; it reads RRQVTEKLKL…LLDTPGILWP (165 aa). Residues 58–61, 130–135, and Gly174 each bind GTP; these read NKAD and NVGKST.

It belongs to the TRAFAC class YlqF/YawG GTPase family. MTG1 subfamily. As to quaternary structure, interacts with ctc. Interacts with the immature 50S ribosome subunit. 2 molecules of rbgA bind to one 50S subunit.

The protein resides in the cytoplasm. Its function is as follows. Essential protein that is required for a late step of 50S ribosomal subunit assembly. Has GTPase activity that is stimulated by interaction with the immature 50S ribosome subunit. Binds to the 23S rRNA. Required for the association of ribosomal proteins rplP and rpmA with the large subunit. In Bacillus cereus (strain ATCC 14579 / DSM 31 / CCUG 7414 / JCM 2152 / NBRC 15305 / NCIMB 9373 / NCTC 2599 / NRRL B-3711), this protein is Ribosome biogenesis GTPase A.